The chain runs to 140 residues: Gastrula zinc finger protein XlCGF49.1 (140 aa).

5 C2H2-type zinc fingers span residues 6–28, 34–56, 62–84, 90–112, and 118–140; these read FTCM…YKIH, FTCM…YKMH, FSCS…QKIH, YACT…WKIH, and FSCT…QKMH.

It belongs to the krueppel C2H2-type zinc-finger protein family.

Its subcellular location is the nucleus. In terms of biological role, may be involved in transcriptional regulation. This chain is Gastrula zinc finger protein XlCGF49.1, found in Xenopus laevis (African clawed frog).